The sequence spans 83 residues: Small proline-rich protein 2A3 (83 aa).

Repeat copies occupy residues 21–29 (PKCPEPCPP), 30–38 (QVWPGPCRP), 39–47 (VMCFEPCLP), 48–56 (SVWPGPCRP), and 57–65 (VVCYEQCPP). The segment at 21 to 65 (PKCPEPCPPQVWPGPCRPVMCFEPCLPSVWPGPCRPVVCYEQCPP) is 5 X 9 AA approximate tandem repeats.

It belongs to the cornifin (SPRR) family. Post-translationally, forms five pairs of intrachain disulfide bonds.

The protein resides in the secreted. It localises to the extracellular space. It is found in the cytoplasmic vesicle. Its subcellular location is the secretory vesicle. Functionally, gut bactericidal protein that selectively kills Gram-positive bacteria by binding to negatively charged lipids on bacterial membranes, leading to bacterial membrane permeabilization and disruption. Specifically binds lipids bearing negatively charged headgroups, such as phosphatidic acid, phosphatidylserine (PS), cardiolipin (CL), and phosphatidylinositol phosphates, but not to zwitterionic or neutral lipids. Induced by type-2 cytokines in response to helminth infection and is required to protect against helminth-induced bacterial invasion of intestinal tissue. May also be involved in the development of the cornified envelope of squamous epithelia; however, additional evidences are required to confirm this result in vivo. This chain is Small proline-rich protein 2A3, found in Mus musculus (Mouse).